Reading from the N-terminus, the 149-residue chain is Nucleoside diphosphate kinase (149 aa).

Residues K9, F57, R85, T91, R102, and N112 each contribute to the ATP site. The Pros-phosphohistidine intermediate role is filled by H115.

Belongs to the NDK family. It depends on Mg(2+) as a cofactor.

Its subcellular location is the cytoplasm. It carries out the reaction a 2'-deoxyribonucleoside 5'-diphosphate + ATP = a 2'-deoxyribonucleoside 5'-triphosphate + ADP. It catalyses the reaction a ribonucleoside 5'-diphosphate + ATP = a ribonucleoside 5'-triphosphate + ADP. Functionally, major role in the synthesis of nucleoside triphosphates other than ATP. The ATP gamma phosphate is transferred to the NDP beta phosphate via a ping-pong mechanism, using a phosphorylated active-site intermediate. The polypeptide is Nucleoside diphosphate kinase (Methanosarcina mazei (strain ATCC BAA-159 / DSM 3647 / Goe1 / Go1 / JCM 11833 / OCM 88) (Methanosarcina frisia)).